The chain runs to 151 residues: Large ribosomal subunit protein bL9 (151 aa).

It belongs to the bacterial ribosomal protein bL9 family.

Binds to the 23S rRNA. The sequence is that of Large ribosomal subunit protein bL9 from Lactobacillus acidophilus (strain ATCC 700396 / NCK56 / N2 / NCFM).